We begin with the raw amino-acid sequence, 182 residues long: UPF0397 protein VS_II0189 (182 aa).

The next 5 membrane-spanning stretches (helical) occupy residues 8–28 (VVVIAIGAALYGIGGLPMFGV), 41–61 (AVLALFSVLFGPIVGFLVGFI), 72–92 (WGVWLTWVLGSGIVGMVIGLF), 110–130 (FALFVVLALAGNVVGYGSSAF), and 146–166 (QLSIIAAGNTILIAVVGFLIL).

It belongs to the UPF0397 family.

The protein resides in the cell membrane. In Vibrio atlanticus (strain LGP32) (Vibrio splendidus (strain Mel32)), this protein is UPF0397 protein VS_II0189.